Here is a 448-residue protein sequence, read N- to C-terminus: MDASTSNQAVVFSTQTPYPLPSQKYMIPTTWRRYHLSQLVNKALGLAKPVPFDFLVKGEILRTTIAEWCAENGVGEEETLEIEYIESVLPPQRLSEFPHESWVSAVSCSLPTHFLTTAYDGHLRAFDLSKNVTLDAALHSAPITSFSVISSTVDTYKLATSSLDLTAQISEITLGEPQSSSSNKVLASLHLHTAPVSSIAANPSGTQLLTSSWDSLIGVWDTTIPPKHEVPEPTITAADQRTKKRRKVDPSSGDSSSPTAIRKAPLTVLKSHIGRVSKVAWLSPTQGVSCGFDSTLRTWDVERGLCTRTISASEKPFLDLAVNVENQTALTVSTDRTMTLYDLRTEEALSAAAGSFLHPATPSCVATTPESSYQVVTGAYDGVVRVWDTRSTKAAISSFKAWDGTKKVLAVDWKRGVIGIGGEGGLDVWKVGLENETQGLSKESQRSA.

A ubiquitin-like (UBL) domain region spans residues 5-86 (TSNQAVVFST…EETLEIEYIE (82 aa)). 6 WD repeats span residues 98 to 136 (PHES…TLDA), 191 to 230 (LHTA…KHEV), 271 to 309 (SHIG…CTRT), 312 to 351 (ASEK…ALSA), 357 to 397 (LHPA…AAIS), and 403 to 439 (DGTK…ETQG). Residues 225 to 261 (PPKHEVPEPTITAADQRTKKRRKVDPSSGDSSSPTAI) are disordered.

This sequence belongs to the WD repeat WDR12/YTM1 family. In terms of assembly, component of the NOP7 complex, composed of ERB1, NOP7 and YTM1. The complex is held together by ERB1, which interacts with NOP7 via its N-terminal domain and with YTM1 via a high-affinity interaction between the seven-bladed beta-propeller domains of the 2 proteins. The NOP7 complex associates with the 66S pre-ribosome. Interacts (via UBL domain) with MDN1 (via VWFA/MIDAS domain).

The protein localises to the nucleus. It is found in the nucleolus. It localises to the nucleoplasm. Component of the NOP7 complex, which is required for maturation of the 25S and 5.8S ribosomal RNAs and formation of the 60S ribosome. The polypeptide is Ribosome biogenesis protein YTM1 (Coprinopsis cinerea (strain Okayama-7 / 130 / ATCC MYA-4618 / FGSC 9003) (Inky cap fungus)).